Here is a 542-residue protein sequence, read N- to C-terminus: Gamma-terpinene synthase 1 (542 aa).

2 residues coordinate Mn(2+): aspartate 295 and aspartate 299. The short motif at 295 to 299 is the DDXXD motif element; the sequence is DDVYD. 2 homodimerization regions span residues 301-307 and 373-410; these read YDTLDEL and EAKWYYAGYTPTLAEYLENAKVSISSPTIISQVYFTLP. Residues aspartate 439 and glutamate 447 each coordinate Mn(2+).

It belongs to the terpene synthase family. As to quaternary structure, homodimer. Mn(2+) is required as a cofactor. The cofactor is Mg(2+). As to expression, mostly expressed in flowers and, to a lower extent, in leaves, especially in glandular trichomes.

It catalyses the reaction (2E)-geranyl diphosphate = gamma-terpinene + diphosphate. It carries out the reaction (2E)-geranyl diphosphate = alpha-terpinene + diphosphate. It functions in the pathway secondary metabolite biosynthesis; terpenoid biosynthesis. Functionally, involved in the biosynthesis of phenolic monoterpenes natural products thymol and carvacrol which have a broad range of biological activities acting as antimicrobial compounds, insecticides, antioxidants and pharmaceutical agents. Monoterpene synthase which catalyzes the conversion of geranyl diphosphate (GPP) to gamma-terpinene and the minor products alpha-thujene, alpha-terpinene, myrcene, sabinene, (+)-R-limonene, alpha-pinene and alpha-phellandrene. This chain is Gamma-terpinene synthase 1, found in Thymus vulgaris (Thyme).